The sequence spans 487 residues: UDP-glycosyltransferase 85A7 (487 aa).

Residues 364-366, 381-389, and 403-406 each bind UDP-alpha-D-glucose; these read CPQ, HCGWNSTLE, and FSEQ.

This sequence belongs to the UDP-glycosyltransferase family. Expressed in roots, shoots, leaves and flowers.

The polypeptide is UDP-glycosyltransferase 85A7 (UGT85A7) (Arabidopsis thaliana (Mouse-ear cress)).